Reading from the N-terminus, the 840-residue chain is Heat shock 70 kDa protein 4 (840 aa).

N6-acetyllysine is present on K53. A Phosphoserine modification is found at S76. Phosphotyrosine is present on residues Y89 and Y336. Phosphoserine is present on residues S393 and S415. N6-acetyllysine is present on K430. A disordered region spans residues 506-575 (NEEPMETDQN…QAKKAKVKTS (70 aa)). Residues 514 to 533 (QNAKEEEKMQVDQEEPHAEE) are compositionally biased toward basic and acidic residues. T538 bears the Phosphothreonine mark. Residues S546 and S647 each carry the phosphoserine modification. Residue Y660 is modified to Phosphotyrosine. K679 is subject to N6-acetyllysine. S756 carries the phosphoserine modification. K773 is subject to N6-methyllysine. A disordered region spans residues 782–840 (IISKPKPKVEPPKEEQKNAEQNGPVDGQGDSPGPQAAEQGTDTAVPSDSDKKLPEMDID). Composition is skewed to basic and acidic residues over residues 788 to 799 (PKVEPPKEEQKN) and 829 to 840 (DSDKKLPEMDID).

It belongs to the heat shock protein 70 family. Interacts with TJP1/ZO-1.

Its subcellular location is the cytoplasm. The polypeptide is Heat shock 70 kDa protein 4 (HSPA4) (Canis lupus familiaris (Dog)).